The chain runs to 175 residues: Macro domain-containing protein TTE0995 (175 aa).

Positions 1–174 (MKEKIKLIKG…VYSKAYEELD (174 aa)) constitute a Macro domain.

It belongs to the MacroD-type family.

This Caldanaerobacter subterraneus subsp. tengcongensis (strain DSM 15242 / JCM 11007 / NBRC 100824 / MB4) (Thermoanaerobacter tengcongensis) protein is Macro domain-containing protein TTE0995.